An 86-amino-acid polypeptide reads, in one-letter code: High affinity immunoglobulin epsilon receptor subunit gamma (86 aa).

Residues 1-18 (MISAVILFLLLLVEQAAA) form the signal peptide. The Extracellular segment spans residues 19–23 (LGEPQ). Residues 24-44 (LCYILDAVLFLYGIVLTLLYC) form a helical membrane-spanning segment. Residues 45-86 (RLKIQVRKAAIASREKADAVYTGLNTRSQETYETLKHEKPPQ) are Cytoplasmic-facing. The 29-residue stretch at 54-82 (AIASREKADAVYTGLNTRSQETYETLKHE) folds into the ITAM domain. Phosphotyrosine occurs at positions 65 and 76. A Phosphothreonine modification is found at Thr-78.

Belongs to the CD3Z/FCER1G family. In terms of assembly, igE Fc receptor is a tetramer of an alpha chain, a beta chain, and two disulfide linked gamma chains. Associates with FCGR1A; forms a functional signaling complex. The signaling subunit of immunoglobulin gamma (IgG) Fc receptor complex. As a homodimer or a heterodimer of CD247 and FCER1G, associates with the ligand binding subunit FCGR3A to form a functional receptor complex. Associates with CLEC6A. Interacts with CLEC4E. Interacts (via ITAM domain) with SYK (via SH2 domains); activates SYK, enabling integrin-mediated activation of neutrophils and macrophages. Interacts with CSF2RB and recruits SYK in response to IL3 stimulation; this interaction is direct. Interacts with CD300LH; the interaction may be indirect. Interacts with CD300LD. Interacts with TARM1. In terms of tissue distribution, expressed in mast cells (at protein level). Expressed in basophils (at protein level).

Its subcellular location is the cell membrane. Adapter protein containing an immunoreceptor tyrosine-based activation motif (ITAM) that transduces activation signals from various immunoreceptors. As a component of the high-affinity immunoglobulin E (IgE) receptor, mediates allergic inflammatory signaling in mast cells. As a constitutive component of interleukin-3 receptor complex, selectively mediates interleukin 4/IL4 production by basophils, priming T-cells toward effector T-helper 2 subset. Associates with pattern recognition receptors CLEC4D and CLEC4E to form a functional signaling complex in myeloid cells. Binding of mycobacterial trehalose 6,6'-dimycolate (TDM) to this receptor complex leads to phosphorylation of ITAM, triggering activation of SYK, CARD9 and NF-kappa-B, consequently driving maturation of antigen-presenting cells and shaping antigen-specific priming of T-cells toward effector T-helper 1 and T-helper 17 cell subtypes. May function cooperatively with other activating receptors. Functionally linked to integrin beta-2/ITGB2-mediated neutrophil activation. Also involved in integrin alpha-2/ITGA2-mediated platelet activation. The chain is High affinity immunoglobulin epsilon receptor subunit gamma from Mus musculus (Mouse).